Here is a 673-residue protein sequence, read N- to C-terminus: MSVRRIFVSSALPYANGSIHLGHMVEHIQTDIWVRFQQLRGHECYYVCADDAHGTAIMLHAEKKGVTPEVLLDEVRAEHISDFQGFLINHHHYHTTHSDENRQLTNEIYQTLKSKGYILKKEISQLFDPEKNIFLPDRFIKGICPKCQAKDQYGDNCEVCGSTYAPTDLIQPYSVLSGATPIMKKSEHFFFDLPQFTDFLKDWLQRADLQPAMRHKLAEWFEAGLQPWDISRDAPYWGFTIPEAKDKYFYVWLDAPVGYLGSFQAFCQQHQHVSFDDFWRDDNKTERYHFIGKDIAYFHMLFWPAMLEGAGLQKPTGVFCHGFLTVNGEKMSKSRGTFIKARTYLKHLRPEYLRYYIASKLSAKVEDIDLNLNDFRQKVNSDLVGKLINLASRSAPFLQRFADNTTVSAFSDSALLEQLRGKSETIARDYEQREFGQAVREVMALADAVNAYVDETKPWILAKETGKAAEIAQIASVVLEAFRLLIIYLKPVLPKVAADAEAFLKLSPQSWQDIEKPMINHEIAAFSPMMQRIEEATLNALIQDSREELKAETKAPVQPSAAPEKSEITIDDFAQLDLRIAKVLACEAVEGSDKLLKFQLDVGDLGKRQVFSGIKRFHQPEELVGQLVVYVANLKPRKMRFGVSEGMILSASDDCDLQILLANGRARAGMTIS.

The 'HIGH' region signature appears at 13–23 (PYANGSIHLGH). Zn(2+) is bound by residues cysteine 144, cysteine 147, cysteine 157, and cysteine 160. Positions 330–334 (KMSKS) match the 'KMSKS' region motif. Lysine 333 serves as a coordination point for ATP. The 102-residue stretch at 572 to 673 (DFAQLDLRIA…GRARAGMTIS (102 aa)) folds into the tRNA-binding domain.

The protein belongs to the class-I aminoacyl-tRNA synthetase family. MetG type 1 subfamily. As to quaternary structure, homodimer. Zn(2+) is required as a cofactor.

It localises to the cytoplasm. The catalysed reaction is tRNA(Met) + L-methionine + ATP = L-methionyl-tRNA(Met) + AMP + diphosphate. Its function is as follows. Is required not only for elongation of protein synthesis but also for the initiation of all mRNA translation through initiator tRNA(fMet) aminoacylation. The sequence is that of Methionine--tRNA ligase from Dichelobacter nodosus (strain VCS1703A).